Reading from the N-terminus, the 424-residue chain is Serine hydroxymethyltransferase 2 (424 aa).

Residues Leu-125 and Gly-129 to Leu-131 contribute to the (6S)-5,6,7,8-tetrahydrofolate site. Lys-234 carries the N6-(pyridoxal phosphate)lysine modification. A (6S)-5,6,7,8-tetrahydrofolate-binding site is contributed by Glu-250.

Belongs to the SHMT family. Homodimer. Pyridoxal 5'-phosphate is required as a cofactor.

It localises to the cytoplasm. It catalyses the reaction (6R)-5,10-methylene-5,6,7,8-tetrahydrofolate + glycine + H2O = (6S)-5,6,7,8-tetrahydrofolate + L-serine. Its pathway is one-carbon metabolism; tetrahydrofolate interconversion. It participates in amino-acid biosynthesis; glycine biosynthesis; glycine from L-serine: step 1/1. Functionally, catalyzes the reversible interconversion of serine and glycine with tetrahydrofolate (THF) serving as the one-carbon carrier. This reaction serves as the major source of one-carbon groups required for the biosynthesis of purines, thymidylate, methionine, and other important biomolecules. Also exhibits THF-independent aldolase activity toward beta-hydroxyamino acids, producing glycine and aldehydes, via a retro-aldol mechanism. The polypeptide is Serine hydroxymethyltransferase 2 (Cupriavidus pinatubonensis (strain JMP 134 / LMG 1197) (Cupriavidus necator (strain JMP 134))).